The sequence spans 612 residues: Alpha-glycerophosphate oxidase (612 aa).

Residue 21–49 coordinates FAD; it reads DLLIIGGGITGAGVALQAAASGLDTGLIE. Positions 398–408 are enriched in basic and acidic residues; sequence VETSTSEKELD. Residues 398 to 418 are disordered; the sequence is VETSTSEKELDPSAVSRGSSF.

The protein belongs to the FAD-dependent glycerol-3-phosphate dehydrogenase family. Requires FAD as cofactor.

It is found in the cytoplasm. The catalysed reaction is sn-glycerol 3-phosphate + O2 = dihydroxyacetone phosphate + H2O2. The protein is Alpha-glycerophosphate oxidase (glpO) of Streptococcus pyogenes serotype M18 (strain MGAS8232).